A 190-amino-acid chain; its full sequence is RING finger protein 227 (190 aa).

Residues 18-81 (CNICFRPYNL…RRAVTCPFCR (64 aa)) form an RING-type zinc finger. Residues 108–147 (ARAEREGDPMGSPAKDSGEDGEDDDGEAESEKGAGPPSAG) are disordered. Over residues 126-135 (EDGEDDDGEA) the composition is skewed to acidic residues.

The chain is RING finger protein 227 from Mus musculus (Mouse).